Consider the following 288-residue polypeptide: Bifunctional protein FolD (288 aa).

Residues 166 to 168 (GRS), serine 191, and isoleucine 232 contribute to the NADP(+) site.

Belongs to the tetrahydrofolate dehydrogenase/cyclohydrolase family. As to quaternary structure, homodimer.

It carries out the reaction (6R)-5,10-methylene-5,6,7,8-tetrahydrofolate + NADP(+) = (6R)-5,10-methenyltetrahydrofolate + NADPH. The enzyme catalyses (6R)-5,10-methenyltetrahydrofolate + H2O = (6R)-10-formyltetrahydrofolate + H(+). It functions in the pathway one-carbon metabolism; tetrahydrofolate interconversion. Its function is as follows. Catalyzes the oxidation of 5,10-methylenetetrahydrofolate to 5,10-methenyltetrahydrofolate and then the hydrolysis of 5,10-methenyltetrahydrofolate to 10-formyltetrahydrofolate. The polypeptide is Bifunctional protein FolD (Rickettsia peacockii (strain Rustic)).